Here is a 208-residue protein sequence, read N- to C-terminus: Calcyphosin-like protein (208 aa).

EF-hand domains are found at residues 39–74 (AGIKGLGRVFRIMDDNNNRTLDFKEFLKGLNDYAVV), 75–110 (MEKEEAEELFQRFDRDGSGTIDFNEFLLTLRPPMSR), 111–146 (ARKEVIMKAFRKLDKTGDGVITIEDLREVYNAKHHP), and 154–191 (TEEQVFRKFLDNFDSPYDKDGLVTPEEFMNYYAGVSAS). D52, N54, N56, T58, E63, D88, D90, S92, T94, and E99 together coordinate Ca(2+).

The protein localises to the cytoplasm. The chain is Calcyphosin-like protein (Capsl) from Mus musculus (Mouse).